The following is a 423-amino-acid chain: Probable histone-binding protein rbbD (423 aa).

WD repeat units lie at residues 119 to 159, 172 to 212, 222 to 262, 266 to 306, 310 to 350, and 367 to 407; these read NHEG…LEPT, GHKK…KSDS, GHTS…KPIH, AHNS…NRLH, SHTD…EEQN, and GHTS…YNDR.

It belongs to the WD repeat RBAP46/RBAP48/MSI1 family. In terms of assembly, probably binds directly to helix 1 of the histone fold of histone H4, a region that is not accessible when H4 is in chromatin.

The protein localises to the nucleus. Its function is as follows. Core histone-binding subunit that may target chromatin assembly factors, chromatin remodeling factors and histone deacetylases to their histone substrates in a manner that is regulated by nucleosomal DNA. Component of several complexes which regulate chromatin metabolism. This is Probable histone-binding protein rbbD (rbbD) from Dictyostelium discoideum (Social amoeba).